Consider the following 711-residue polypeptide: Ribosomal RNA large subunit methyltransferase K/L (711 aa).

The THUMP domain maps to 43–154; that stretch reads LGYRITLWSR…RGQITIGLNF (112 aa).

The protein belongs to the methyltransferase superfamily. RlmKL family.

It is found in the cytoplasm. It catalyses the reaction guanosine(2445) in 23S rRNA + S-adenosyl-L-methionine = N(2)-methylguanosine(2445) in 23S rRNA + S-adenosyl-L-homocysteine + H(+). It carries out the reaction guanosine(2069) in 23S rRNA + S-adenosyl-L-methionine = N(2)-methylguanosine(2069) in 23S rRNA + S-adenosyl-L-homocysteine + H(+). Functionally, specifically methylates the guanine in position 2445 (m2G2445) and the guanine in position 2069 (m7G2069) of 23S rRNA. The chain is Ribosomal RNA large subunit methyltransferase K/L from Shewanella woodyi (strain ATCC 51908 / MS32).